A 572-amino-acid polypeptide reads, in one-letter code: Probable terpene synthase 13 (572 aa).

Positions 326, 330, and 478 each coordinate Mg(2+). A DDXXD motif motif is present at residues 326-330 (DDIFD).

Belongs to the terpene synthase family. Mg(2+) is required as a cofactor.

Probable sesquiterpene synthase. The protein is Probable terpene synthase 13 (TPS13) of Ricinus communis (Castor bean).